We begin with the raw amino-acid sequence, 253 residues long: 4-hydroxy-tetrahydrodipicolinate reductase (253 aa).

16–21 provides a ligand contact to NAD(+); the sequence is GDTGRM. R44 contacts NADP(+). Residues 85–87 and 111–114 contribute to the NAD(+) site; these read GTT and CANT. H144 (proton donor/acceptor) is an active-site residue. A (S)-2,3,4,5-tetrahydrodipicolinate-binding site is contributed by H145. The active-site Proton donor is K148. 154 to 155 serves as a coordination point for (S)-2,3,4,5-tetrahydrodipicolinate; it reads GT.

Belongs to the DapB family.

Its subcellular location is the cytoplasm. The catalysed reaction is (S)-2,3,4,5-tetrahydrodipicolinate + NAD(+) + H2O = (2S,4S)-4-hydroxy-2,3,4,5-tetrahydrodipicolinate + NADH + H(+). The enzyme catalyses (S)-2,3,4,5-tetrahydrodipicolinate + NADP(+) + H2O = (2S,4S)-4-hydroxy-2,3,4,5-tetrahydrodipicolinate + NADPH + H(+). It participates in amino-acid biosynthesis; L-lysine biosynthesis via DAP pathway; (S)-tetrahydrodipicolinate from L-aspartate: step 4/4. Its function is as follows. Catalyzes the conversion of 4-hydroxy-tetrahydrodipicolinate (HTPA) to tetrahydrodipicolinate. The sequence is that of 4-hydroxy-tetrahydrodipicolinate reductase from Chlamydia trachomatis serovar A (strain ATCC VR-571B / DSM 19440 / HAR-13).